The chain runs to 335 residues: Glutamyl-tRNA reductase (335 aa).

Substrate is bound by residues 60–63, Ser-110, 115–117, and Gln-121; these read TCHR and ETE. Cys-61 functions as the Nucleophile in the catalytic mechanism. NADP(+) is bound at residue 189 to 194; that stretch reads GYSEIN.

Belongs to the glutamyl-tRNA reductase family. In terms of assembly, homodimer.

It carries out the reaction (S)-4-amino-5-oxopentanoate + tRNA(Glu) + NADP(+) = L-glutamyl-tRNA(Glu) + NADPH + H(+). It functions in the pathway porphyrin-containing compound metabolism; protoporphyrin-IX biosynthesis; 5-aminolevulinate from L-glutamyl-tRNA(Glu): step 1/2. Catalyzes the NADPH-dependent reduction of glutamyl-tRNA(Glu) to glutamate 1-semialdehyde (GSA). In Chlamydia trachomatis serovar A (strain ATCC VR-571B / DSM 19440 / HAR-13), this protein is Glutamyl-tRNA reductase.